Consider the following 362-residue polypeptide: UPF0283 membrane protein Arad_2632 (362 aa).

Over residues 1-11 (MTKPTEDDPKG) the composition is skewed to basic and acidic residues. The disordered stretch occupies residues 1-47 (MTKPTEDDPKGISRRPAAFSLEQEASREGAHTKTTAETPRRKPQSFD). Transmembrane regions (helical) follow at residues 82 to 102 (FSFG…AFGL) and 118 to 138 (LGYT…AIVV).

It belongs to the UPF0283 family.

The protein localises to the cell inner membrane. This is UPF0283 membrane protein Arad_2632 from Rhizobium rhizogenes (strain K84 / ATCC BAA-868) (Agrobacterium radiobacter).